The primary structure comprises 309 residues: MASSSHNPVILLKRILSLTESSPFILCLDSIAQTSYKLIQEFVHQSKSKGNEYPIVYISFETVNKPSYCTQFIDATQMDFVHLVKQIISYLPAATATQAKKHMVIIDSLNYISTEYITRFLSEIASPHCTMVATYHKDIKDENRTVIPDWNNNYPDKLTLLQFMATTIVDIDVVLTGTLDTEEVSELLNEFRIPRGLNNDIFQLRLVNKRKSGRSLEYDFIVNSNTHEYELLSTTKQEEESSSNGLETPEMLQGLTTFNLGTSNKQKLAKDQVALPFLEAQSFGQGGAIVYEYEKDDDYDEEDPYEDPF.

Ser3 and Ser4 each carry phosphoserine.

This sequence belongs to the ELP5 family. In terms of assembly, component of the elongator complex, which consists of ELP1/IKI3, ELP2, ELP3, ELP4, ELP5/IKI1 and ELP6. The elongator complex is composed of two copies of the Elp123 subcomplex (composed of ELP1/IKI3, ELP2 and ELP3) and two copies of the Elp456 subcomplex (composed of ELP4, ELP5/IKI1 and ELP6). The Elp123 subcomplex forms a two-lobed scaffold, which binds the Elp456 subcomplex asymmetrically. In each lobe, ELP2 is tightly sandwiched between ELP1/IKI3 and ELP3. The Elp123 subcomplex binds tRNA through ELP1/IKI3 and ELP3 and can bind 2 tRNAs simultaneously. tRNA-binding by the Elp123 subcomplex induces conformational rearrangements which precisely position the targeted anticodon base in the active site. The Elp456 subcomplex binds tRNA and has ATPase activity. Interacts with KTI11/DPH3.

It is found in the cytoplasm. The protein resides in the nucleus. It participates in tRNA modification; 5-methoxycarbonylmethyl-2-thiouridine-tRNA biosynthesis. In terms of biological role, component of the elongator complex which is required for multiple tRNA modifications, including mcm5U (5-methoxycarbonylmethyl uridine), mcm5s2U (5-methoxycarbonylmethyl-2-thiouridine), and ncm5U (5-carbamoylmethyl uridine). The elongator complex catalyzes formation of carboxymethyluridine in the wobble base at position 34 in tRNAs. It functions as a gamma-toxin target (TOT); disruption of the complex confers resistance to Kluyveromyces lactis toxin zymocin (pGKL1 killer toxin). May also be involved in sensitivity to Pichia inositovora toxin. The polypeptide is Elongator complex protein 5 (IKI1) (Saccharomyces cerevisiae (strain ATCC 204508 / S288c) (Baker's yeast)).